Reading from the N-terminus, the 155-residue chain is Protein-export protein SecB (155 aa).

This sequence belongs to the SecB family. Homotetramer, a dimer of dimers. One homotetramer interacts with 1 SecA dimer.

It is found in the cytoplasm. In terms of biological role, one of the proteins required for the normal export of preproteins out of the cell cytoplasm. It is a molecular chaperone that binds to a subset of precursor proteins, maintaining them in a translocation-competent state. It also specifically binds to its receptor SecA. The protein is Protein-export protein SecB of Escherichia fergusonii (strain ATCC 35469 / DSM 13698 / CCUG 18766 / IAM 14443 / JCM 21226 / LMG 7866 / NBRC 102419 / NCTC 12128 / CDC 0568-73).